Consider the following 233-residue polypeptide: Orotidine 5'-phosphate decarboxylase (233 aa).

Residues Asp13, Lys35, Asp62–Thr71, Thr122, Arg182, Gln191, Gly211, and Arg212 contribute to the substrate site. Residue Lys64 is the Proton donor of the active site.

It belongs to the OMP decarboxylase family. Type 1 subfamily. In terms of assembly, homodimer.

The catalysed reaction is orotidine 5'-phosphate + H(+) = UMP + CO2. The protein operates within pyrimidine metabolism; UMP biosynthesis via de novo pathway; UMP from orotate: step 2/2. In terms of biological role, catalyzes the decarboxylation of orotidine 5'-monophosphate (OMP) to uridine 5'-monophosphate (UMP). This is Orotidine 5'-phosphate decarboxylase from Pseudomonas putida (strain GB-1).